Consider the following 78-residue polypeptide: Large ribosomal subunit protein bL28 (78 aa).

A disordered region spans residues 1-30 (MAAHCQVTGAQPGFGHSISHSHRRTKRRWN). Residues 19 to 30 (SHSHRRTKRRWN) show a composition bias toward basic residues.

It belongs to the bacterial ribosomal protein bL28 family.

This chain is Large ribosomal subunit protein bL28, found in Kocuria rhizophila (strain ATCC 9341 / DSM 348 / NBRC 103217 / DC2201).